The sequence spans 219 residues: Deoxyribose-phosphate aldolase (219 aa).

The Proton donor/acceptor role is filled by Asp92. Residue Lys154 is the Schiff-base intermediate with acetaldehyde of the active site. The active-site Proton donor/acceptor is Lys183.

The protein belongs to the DeoC/FbaB aldolase family. DeoC type 1 subfamily.

The protein resides in the cytoplasm. The catalysed reaction is 2-deoxy-D-ribose 5-phosphate = D-glyceraldehyde 3-phosphate + acetaldehyde. It participates in carbohydrate degradation; 2-deoxy-D-ribose 1-phosphate degradation; D-glyceraldehyde 3-phosphate and acetaldehyde from 2-deoxy-alpha-D-ribose 1-phosphate: step 2/2. Its function is as follows. Catalyzes a reversible aldol reaction between acetaldehyde and D-glyceraldehyde 3-phosphate to generate 2-deoxy-D-ribose 5-phosphate. This chain is Deoxyribose-phosphate aldolase, found in Dictyoglomus turgidum (strain DSM 6724 / Z-1310).